We begin with the raw amino-acid sequence, 243 residues long: Cell division protein FtsQ (243 aa).

The Cytoplasmic segment spans residues 1 to 19; it reads MKRYNAKRKTHRNLKSIKK. Residues 20–40 form a helical membrane-spanning segment; sequence LIPTVLALLAFVSLLAGIITL. The Periplasmic portion of the chain corresponds to 41–243; sequence HNPKTLPFRQ…SNGLAIQWKN (203 aa). A POTRA domain is found at 46–115; the sequence is LPFRQIKITV…NELEIQVEEQ (70 aa).

It belongs to the FtsQ/DivIB family. FtsQ subfamily. In terms of assembly, part of a complex composed of FtsB, FtsL and FtsQ.

The protein localises to the cell inner membrane. Functionally, essential cell division protein. May link together the upstream cell division proteins, which are predominantly cytoplasmic, with the downstream cell division proteins, which are predominantly periplasmic. May control correct divisome assembly. This chain is Cell division protein FtsQ, found in Coxiella burnetii (strain RSA 493 / Nine Mile phase I).